The following is a 1170-amino-acid chain: Structural maintenance of chromosomes protein 2 (1170 aa).

32–39 (GLNGSGKS) is a binding site for ATP. Positions 172-469 (KMFEDRREKA…DKLRARLVEY (298 aa)) form a coiled coil. Residues 523-641 (VHGVVGQLFQ…CEDPETAKKI (119 aa)) enclose the SMC hinge domain. Residues 678-1027 (VDIQKYNQIQ…ISKLNEYKRE (350 aa)) are a coiled coil.

Belongs to the SMC family. SMC2 subfamily. As to quaternary structure, forms a heterodimer with SMC4. Component of the condensin complex, which contains the SMC2 and SMC4 heterodimer, and three non SMC subunits that probably regulate the complex: BRN1, YCS4 and YCG1/YCS5.

The protein localises to the nucleus. It localises to the cytoplasm. The protein resides in the chromosome. Central component of the condensin complex, a complex required for conversion of interphase chromatin into mitotic-like condense chromosomes. The condensin complex probably introduces positive supercoils into relaxed DNA in the presence of type I topoisomerases and converts nicked DNA into positive knotted forms in the presence of type II topoisomerases. The protein is Structural maintenance of chromosomes protein 2 (SMC2) of Saccharomyces cerevisiae (strain ATCC 204508 / S288c) (Baker's yeast).